Consider the following 193-residue polypeptide: Large ribosomal subunit protein bL21 (193 aa).

This sequence belongs to the bacterial ribosomal protein bL21 family. Part of the 50S ribosomal subunit. Contacts protein L20.

In terms of biological role, this protein binds to 23S rRNA in the presence of protein L20. The polypeptide is Large ribosomal subunit protein bL21 (Ruegeria pomeroyi (strain ATCC 700808 / DSM 15171 / DSS-3) (Silicibacter pomeroyi)).